Reading from the N-terminus, the 750-residue chain is Cullin-5 (750 aa).

The region spanning 678-739 (RFFKLQAAIV…QEYIRRTTDD (62 aa)) is the Cullin neddylation domain. Lys-691 is covalently cross-linked (Glycyl lysine isopeptide (Lys-Gly) (interchain with G-Cter in NEDD8)).

The protein belongs to the cullin family. Neddylated; which enhances the ubiquitination activity of SCF-like complex.

It participates in protein modification; protein ubiquitination. Probable core component of cullin-based SCF-like E3 ubiquitin-protein ligase complexes which mediate the ubiquitination and subsequent proteasomal degradation of target proteins. The E3 ubiquitin-protein ligase activity of the complex is dependent on the neddylation of the cullin subunit. The protein is Cullin-5 (culE) of Dictyostelium discoideum (Social amoeba).